Consider the following 90-residue polypeptide: MALMDFFKKKASGSVAKDRLKLVLVSDRAGCSPEIMEQIKNDIIAVISKYIVIDQEGLDIKITQTESEGNNGNVPALFANIPIKDLKHSK.

The protein belongs to the MinE family.

Functionally, prevents the cell division inhibition by proteins MinC and MinD at internal division sites while permitting inhibition at polar sites. This ensures cell division at the proper site by restricting the formation of a division septum at the midpoint of the long axis of the cell. This Lachnoclostridium phytofermentans (strain ATCC 700394 / DSM 18823 / ISDg) (Clostridium phytofermentans) protein is Cell division topological specificity factor.